We begin with the raw amino-acid sequence, 249 residues long: Probable transcriptional regulator ycf27 (249 aa).

Residues 13 to 126 (HLLIVDDENN…ELEARIQSIL (114 aa)) form the Response regulatory domain. At aspartate 62 the chain carries 4-aspartylphosphate. Residues 82-100 (DIPIIMLTALEDVLDKVTG) constitute a DNA-binding region (H-T-H motif). The ompR/PhoB-type DNA-binding region spans 142 to 246 (INLFKTGSLN…ARGTGYLCRK (105 aa)).

The protein localises to the plastid. Its subcellular location is the chloroplast. In terms of biological role, probable promoter-specific protein mediating the interaction between DNA and RNA polymerase. This is Probable transcriptional regulator ycf27 (ycf27) from Cyanidium caldarium (Red alga).